Consider the following 374-residue polypeptide: Anhydro-N-acetylmuramic acid kinase (374 aa).

9-16 lines the ATP pocket; it reads GTSLDGID.

It belongs to the anhydro-N-acetylmuramic acid kinase family.

The catalysed reaction is 1,6-anhydro-N-acetyl-beta-muramate + ATP + H2O = N-acetyl-D-muramate 6-phosphate + ADP + H(+). Its pathway is amino-sugar metabolism; 1,6-anhydro-N-acetylmuramate degradation. It participates in cell wall biogenesis; peptidoglycan recycling. Functionally, catalyzes the specific phosphorylation of 1,6-anhydro-N-acetylmuramic acid (anhMurNAc) with the simultaneous cleavage of the 1,6-anhydro ring, generating MurNAc-6-P. Is required for the utilization of anhMurNAc either imported from the medium or derived from its own cell wall murein, and thus plays a role in cell wall recycling. The polypeptide is Anhydro-N-acetylmuramic acid kinase (Methylobacterium nodulans (strain LMG 21967 / CNCM I-2342 / ORS 2060)).